A 415-amino-acid chain; its full sequence is Citrate (Re)-synthase (415 aa).

In terms of domain architecture, Pyruvate carboxyltransferase spans 4-275 (IFIIDVTNRD…GHEVDLSKAW (272 aa)).

It belongs to the alpha-IPM synthase/homocitrate synthase family. It depends on Mn(2+) as a cofactor.

It catalyses the reaction oxaloacetate + acetyl-CoA + H2O = citrate + CoA + H(+). Its activity is regulated as follows. Inhibited by citrate and under aerobic conditions. Functionally, catalyzes the condensation of the acetyl group of acetyl coenzyme A (acetyl-CoA) with oxaloacetate to form citrate. This enzyme is highly Re-face stereospecific with respect to the C-2 of oxaloacetate. In Dehalococcoides mccartyi (strain CBDB1), this protein is Citrate (Re)-synthase.